The following is a 336-amino-acid chain: Ornithine carbamoyltransferase, catabolic (336 aa).

Residues 57-60 (STRT), glutamine 84, arginine 108, and 135-138 (HPTQ) contribute to the carbamoyl phosphate site. L-ornithine is bound by residues asparagine 169, aspartate 233, and 237–238 (SM). Residues 275 to 276 (CL) and arginine 322 each bind carbamoyl phosphate.

Belongs to the aspartate/ornithine carbamoyltransferase superfamily. OTCase family.

The protein resides in the cytoplasm. The catalysed reaction is carbamoyl phosphate + L-ornithine = L-citrulline + phosphate + H(+). It functions in the pathway amino-acid degradation; L-arginine degradation via ADI pathway; carbamoyl phosphate from L-arginine: step 2/2. Its function is as follows. Reversibly catalyzes the transfer of the carbamoyl group from carbamoyl phosphate (CP) to the N(epsilon) atom of ornithine (ORN) to produce L-citrulline. This is Ornithine carbamoyltransferase, catabolic from Photobacterium profundum (strain SS9).